Here is a 279-residue protein sequence, read N- to C-terminus: Energy-coupling factor transporter ATP-binding protein EcfA1 (279 aa).

The ABC transporter domain occupies 6–240 (VRLEHVFYKY…ADAMREIGLG (235 aa)). 40–47 (GHNGSGKS) provides a ligand contact to ATP.

This sequence belongs to the ABC transporter superfamily. Energy-coupling factor EcfA family. As to quaternary structure, forms a stable energy-coupling factor (ECF) transporter complex composed of 2 membrane-embedded substrate-binding proteins (S component), 2 ATP-binding proteins (A component) and 2 transmembrane proteins (T component).

Its subcellular location is the cell membrane. Functionally, ATP-binding (A) component of a common energy-coupling factor (ECF) ABC-transporter complex. Unlike classic ABC transporters this ECF transporter provides the energy necessary to transport a number of different substrates. The protein is Energy-coupling factor transporter ATP-binding protein EcfA1 of Listeria monocytogenes serotype 4b (strain F2365).